Consider the following 226-residue polypeptide: UPF0502 protein azo0627 (226 aa).

This sequence belongs to the UPF0502 family.

This is UPF0502 protein azo0627 from Azoarcus sp. (strain BH72).